The chain runs to 1050 residues: MSSEESYRAILRYLTNEREPYAPGTEGNVKRKIRKAAACYVVRGGTLYYQRRQRHRKTFAELEVVLQPERRQGLIEAAHLGPGGTHHTRHQTWHDLSKTYWWRGILKQVKDYIKQCSKCQEKLDRSRPISDASEMLEELGLDLDSGEESNESEDDLSNFTSPPSTASKSSKKKPVSKHELVFVDTKGVVKRSSPKHCQAVLKQLNEQRLSNQFCDVTLLIEGEEYKAHKSVLSANSEYFRDLFIEKGAVSSHEAVVDLSGFCKASFLPLLEFAYTSVLSFDFCSMADVAVLARHLFMSEVLEICESVHKLMEEKQLTVYKKGEVQTVASTQDLAAHNGTTTPPGTRNEATTTLSGELGHCEIVLLVNGELPEAEQNGEPEQQPAPQASPEAEASVSPVEGIPEPHPEMGTASLAKESNQPESAVTREDGIVASVHPKISKENVTNASQEDSDTGNDTSPEDIGAKDCPDHSQSPGQPSKDEDTLTEATEKTDSGPDDDTYRSRLRQRSVNEGGYIRLHKGMEKKLQKRKAISKSAVQQVAQKLVQRGKKMKQPKRDAKESTEETAHKCGECGMVFPRRYAFIMHTLKHERARDYKCPLCKKQFQYSASLRAHLIRHTRKEAPTSSSSNSTSTEASGGSSEKGRTKREFICSICGRTLPKLYSLRIHMLKHTGVKPHACQVCGKTFIYKHGLKLHQSLHQSQKQFQCELCVKSFVTKRSLQEHMSIHTGESKYFCSICGKSFHRGSGLSKHLKKHQPKPEVRGYHCTQCEKSFFEARDLRQHMNKHLGVKPFQCQFCDKCYSWKKDWYSHVKSHSVTEPYRCNICGKEFYEKALFRRHVKKATHGKKGRAKQNLERVCDQCGRKFTQLREYRRHMNNHEGVKPFECLTCGVAWADARSLKRHVRTHTGERPYVCPVCSEAYIDARTLRKHMTKFHRDYVPCKIMLEKDTLQFHNQGTQVEHAVSILTADMQEQESSGPQELETVVVTGETMEVLEAVAATEECPSVSTLSDQSIMQVVNYVLAQQQGQKLSEVAEAIQTVEVEVAHMPEAE.

Residues 143-156 show a composition bias toward acidic residues; that stretch reads LDSGEESNESEDDL. Residues 143–173 form a disordered region; that stretch reads LDSGEESNESEDDLSNFTSPPSTASKSSKKK. The span at 157–168 shows a compositional bias: low complexity; it reads SNFTSPPSTASK. The region spanning 214–282 is the BTB domain; that stretch reads CDVTLLIEGE…AYTSVLSFDF (69 aa). 2 disordered regions span residues 373-514 and 543-563; these read AEQN…EGGY and LVQRGKKMKQPKRDAKESTEE. Over residues 378 to 399 the composition is skewed to low complexity; that stretch reads EPEQQPAPQASPEAEASVSPVE. 2 stretches are compositionally biased toward basic and acidic residues: residues 478–501 and 553–563; these read SKDEDTLTEATEKTDSGPDDDTYR and PKRDAKESTEE. 2 C2H2-type zinc fingers span residues 566 to 588 and 594 to 616; these read HKCGECGMVFPRRYAFIMHTLKH and YKCPLCKKQFQYSASLRAHLIRH. Residues 617–641 are disordered; that stretch reads TRKEAPTSSSSNSTSTEASGGSSEK. A compositionally biased stretch (low complexity) spans 623–638; that stretch reads TSSSSNSTSTEASGGS. C2H2-type zinc fingers lie at residues 648 to 670, 676 to 698, 704 to 726, 732 to 754, 763 to 785, 791 to 813, 819 to 843, 855 to 877, 883 to 905, and 911 to 934; these read FICSICGRTLPKLYSLRIHMLKH, HACQVCGKTFIYKHGLKLHQSLH, FQCELCVKSFVTKRSLQEHMSIH, YFCSICGKSFHRGSGLSKHLKKH, YHCTQCEKSFFEARDLRQHMNKH, FQCQFCDKCYSWKKDWYSHVKSH, YRCNICGKEFYEKALFRRHVKKATH, RVCDQCGRKFTQLREYRRHMNNH, FECLTCGVAWADARSLKRHVRTH, and YVCPVCSEAYIDARTLRKHMTKFH.

Its subcellular location is the nucleus. The protein localises to the nucleolus. Its function is as follows. May be involved in transcriptional regulation. The polypeptide is Zinc finger and BTB domain-containing protein 11 (Mus musculus (Mouse)).